The sequence spans 339 residues: Holliday junction branch migration complex subunit RuvB (339 aa).

Residues 1–22 (MIDADPTLRPEPLPEDNDRALR) are disordered. Positions 1-182 (MIDADPTLRP…FGIPTRLQFY (182 aa)) are large ATPase domain (RuvB-L). ATP contacts are provided by residues Leu21, Arg22, Gly63, Lys66, Thr67, Thr68, 129-131 (EDF), Arg172, Tyr182, and Arg219. Residue Thr67 coordinates Mg(2+). The tract at residues 183–253 (TIDELFEIVS…LADGALTRLG (71 aa)) is small ATPAse domain (RuvB-S). A head domain (RuvB-H) region spans residues 256–339 (QLGLDGADRR…PPKSQSDLFG (84 aa)). Residues Arg292, Arg311, and Arg316 each coordinate DNA.

This sequence belongs to the RuvB family. As to quaternary structure, homohexamer. Forms an RuvA(8)-RuvB(12)-Holliday junction (HJ) complex. HJ DNA is sandwiched between 2 RuvA tetramers; dsDNA enters through RuvA and exits via RuvB. An RuvB hexamer assembles on each DNA strand where it exits the tetramer. Each RuvB hexamer is contacted by two RuvA subunits (via domain III) on 2 adjacent RuvB subunits; this complex drives branch migration. In the full resolvosome a probable DNA-RuvA(4)-RuvB(12)-RuvC(2) complex forms which resolves the HJ.

The protein resides in the cytoplasm. The enzyme catalyses ATP + H2O = ADP + phosphate + H(+). Its function is as follows. The RuvA-RuvB-RuvC complex processes Holliday junction (HJ) DNA during genetic recombination and DNA repair, while the RuvA-RuvB complex plays an important role in the rescue of blocked DNA replication forks via replication fork reversal (RFR). RuvA specifically binds to HJ cruciform DNA, conferring on it an open structure. The RuvB hexamer acts as an ATP-dependent pump, pulling dsDNA into and through the RuvAB complex. RuvB forms 2 homohexamers on either side of HJ DNA bound by 1 or 2 RuvA tetramers; 4 subunits per hexamer contact DNA at a time. Coordinated motions by a converter formed by DNA-disengaged RuvB subunits stimulates ATP hydrolysis and nucleotide exchange. Immobilization of the converter enables RuvB to convert the ATP-contained energy into a lever motion, pulling 2 nucleotides of DNA out of the RuvA tetramer per ATP hydrolyzed, thus driving DNA branch migration. The RuvB motors rotate together with the DNA substrate, which together with the progressing nucleotide cycle form the mechanistic basis for DNA recombination by continuous HJ branch migration. Branch migration allows RuvC to scan DNA until it finds its consensus sequence, where it cleaves and resolves cruciform DNA. This Ruegeria sp. (strain TM1040) (Silicibacter sp.) protein is Holliday junction branch migration complex subunit RuvB.